The chain runs to 162 residues: SsrA-binding protein (162 aa).

Belongs to the SmpB family.

Its subcellular location is the cytoplasm. Functionally, required for rescue of stalled ribosomes mediated by trans-translation. Binds to transfer-messenger RNA (tmRNA), required for stable association of tmRNA with ribosomes. tmRNA and SmpB together mimic tRNA shape, replacing the anticodon stem-loop with SmpB. tmRNA is encoded by the ssrA gene; the 2 termini fold to resemble tRNA(Ala) and it encodes a 'tag peptide', a short internal open reading frame. During trans-translation Ala-aminoacylated tmRNA acts like a tRNA, entering the A-site of stalled ribosomes, displacing the stalled mRNA. The ribosome then switches to translate the ORF on the tmRNA; the nascent peptide is terminated with the 'tag peptide' encoded by the tmRNA and targeted for degradation. The ribosome is freed to recommence translation, which seems to be the essential function of trans-translation. This Granulibacter bethesdensis (strain ATCC BAA-1260 / CGDNIH1) protein is SsrA-binding protein.